Reading from the N-terminus, the 388-residue chain is Large ribosomal subunit protein uL3A (388 aa).

Positions 1–10 are enriched in basic and acidic residues; the sequence is MSHCKFEQPR. The segment at 1–34 is disordered; sequence MSHCKFEQPRHGSLGFLPRKRASRQRGKVKAFPK. Residue Ser-13 is modified to Phosphoserine. Residues 18–31 are compositionally biased toward basic residues; sequence PRKRASRQRGKVKA. A phosphoserine mark is found at Ser-65, Ser-140, Ser-143, Ser-207, Ser-295, and Ser-355. Position 372 is a phosphothreonine (Thr-372).

This sequence belongs to the universal ribosomal protein uL3 family. As to quaternary structure, component of the large ribosomal subunit (LSU). Mature yeast ribosomes consist of a small (40S) and a large (60S) subunit. The 40S small subunit contains 1 molecule of ribosomal RNA (18S rRNA) and at least 33 different proteins. The large 60S subunit contains 3 rRNA molecules (25S, 5.8S and 5S rRNA) and at least 46 different proteins. uL3 forms together with ES39L one of the contact sites for the signal recognition particle that targets ribosomes to the endoplasmic reticulum membrane.

Its subcellular location is the cytoplasm. Its function is as follows. Component of the ribosome, a large ribonucleoprotein complex responsible for the synthesis of proteins in the cell. The small ribosomal subunit (SSU) binds messenger RNAs (mRNAs) and translates the encoded message by selecting cognate aminoacyl-transfer RNA (tRNA) molecules. The large subunit (LSU) contains the ribosomal catalytic site termed the peptidyl transferase center (PTC), which catalyzes the formation of peptide bonds, thereby polymerizing the amino acids delivered by tRNAs into a polypeptide chain. The nascent polypeptides leave the ribosome through a tunnel in the LSU and interact with protein factors that function in enzymatic processing, targeting, and the membrane insertion of nascent chains at the exit of the ribosomal tunnel. uL3 plays a role in coordinating processes of accommodating the aminoacyl-tRNA in the PTC. The chain is Large ribosomal subunit protein uL3A (rpl301) from Schizosaccharomyces pombe (strain 972 / ATCC 24843) (Fission yeast).